We begin with the raw amino-acid sequence, 230 residues long: Somatolactin (230 aa).

The signal sequence occupies residues 1–23 (MIKTKVLQAWMGIWLCAVNGLLG). Intrachain disulfides connect Cys-28/Cys-38, Cys-87/Cys-202, and Cys-219/Cys-227. Residue Asn-177 is glycosylated (N-linked (GlcNAc...) asparagine).

This sequence belongs to the somatotropin/prolactin family.

It localises to the secreted. The protein is Somatolactin of Ictalurus punctatus (Channel catfish).